Reading from the N-terminus, the 527-residue chain is Benzoate--CoA ligase (527 aa).

This sequence belongs to the ATP-dependent AMP-binding enzyme family. Benzoate-CoA ligase subfamily. As to quaternary structure, monomer.

It carries out the reaction benzoate + ATP + CoA = benzoyl-CoA + AMP + diphosphate. In terms of biological role, catalyzes the ligation of benzoate and CoA to form benzoyl-CoA at the expense of ATP. The enzyme also ligates 2-aminobenzoate and CoA. The enzyme shows activity toward a number of benzoate derivatives. In Thauera aromatica, this protein is Benzoate--CoA ligase (bclA).